The chain runs to 215 residues: Adenylate kinase (215 aa).

Position 10–15 (10–15 (GAGKGT)) interacts with ATP. The tract at residues 30–59 (STGDMFRAAIKEGTELGKQAKALMDQGKLV) is NMP. AMP-binding positions include Thr-31, Arg-36, 57–59 (KLV), 85–88 (GFPR), and Gln-92. Positions 122–159 (GRRVHQPSGRTYHIIYNPPKVAGQDDITGEELITRADD) are LID. ATP contacts are provided by residues Arg-123 and 132–133 (TY). Positions 156 and 167 each coordinate AMP. Lys-200 is a binding site for ATP.

Belongs to the adenylate kinase family. Monomer.

The protein localises to the cytoplasm. It carries out the reaction AMP + ATP = 2 ADP. The protein operates within purine metabolism; AMP biosynthesis via salvage pathway; AMP from ADP: step 1/1. Functionally, catalyzes the reversible transfer of the terminal phosphate group between ATP and AMP. Plays an important role in cellular energy homeostasis and in adenine nucleotide metabolism. The protein is Adenylate kinase of Haemophilus ducreyi (strain 35000HP / ATCC 700724).